Consider the following 138-residue polypeptide: Putative pre-16S rRNA nuclease (138 aa).

The protein belongs to the YqgF nuclease family.

It is found in the cytoplasm. Its function is as follows. Could be a nuclease involved in processing of the 5'-end of pre-16S rRNA. The polypeptide is Putative pre-16S rRNA nuclease (Porphyromonas gingivalis (strain ATCC BAA-308 / W83)).